The sequence spans 128 residues: 3-aminoacrylate deaminase RutC (128 aa).

This sequence belongs to the RutC family. In terms of assembly, homotrimer.

The catalysed reaction is (Z)-3-aminoacrylate + H2O + H(+) = 3-oxopropanoate + NH4(+). Involved in pyrimidine catabolism. Catalyzes the deamination of 3-aminoacrylate to malonic semialdehyde, a reaction that can also occur spontaneously. RutC may facilitate the reaction and modulate the metabolic fitness, rather than catalyzing essential functions. The chain is 3-aminoacrylate deaminase RutC from Escherichia coli O157:H7.